Reading from the N-terminus, the 126-residue chain is Glycine cleavage system H protein (126 aa).

The 83-residue stretch at 21–103 folds into the Lipoyl-binding domain; the sequence is TVTIGISEHA…YEGGWIVKVK (83 aa). The residue at position 62 (lysine 62) is an N6-lipoyllysine.

The protein belongs to the GcvH family. The glycine cleavage system is composed of four proteins: P, T, L and H. (R)-lipoate serves as cofactor.

In terms of biological role, the glycine cleavage system catalyzes the degradation of glycine. The H protein shuttles the methylamine group of glycine from the P protein to the T protein. In Vibrio vulnificus (strain CMCP6), this protein is Glycine cleavage system H protein.